The sequence spans 748 residues: Subtilisin-like protease (748 aa).

The first 24 residues, 1 to 24 (MMKMELRLLVSLIFILCSISMLAA), serve as a signal peptide directing secretion. In terms of domain architecture, Inhibitor I9 spans 37–115 (TYIVHVKKSE…ARPERTLELH (79 aa)). The Peptidase S8 domain occupies 122-600 (FLGLKQGQGL…AGHVNPVKAN (479 aa)). Catalysis depends on charge relay system residues aspartate 147 and histidine 206. Residues 365–454 (PLVYPGSFGY…VEVSYAAGLT (90 aa)) enclose the PA domain. 3 N-linked (GlcNAc...) asparagine glycosylation sites follow: asparagine 376, asparagine 380, and asparagine 405. Serine 533 serves as the catalytic Charge relay system. N-linked (GlcNAc...) asparagine glycosylation is found at asparagine 675 and asparagine 722.

Belongs to the peptidase S8 family.

Its subcellular location is the secreted. The protein localises to the extracellular space. The protein resides in the apoplast. Functionally, required for arbuscular mycorrhiza (AM) development during AM symbiosis with AM fungi (e.g. Glomeromycota intraradices). This chain is Subtilisin-like protease, found in Medicago truncatula (Barrel medic).